A 222-amino-acid chain; its full sequence is Ribosome maturation factor RimM (222 aa).

Residues 1-22 (MTERKQGAARPLNRPLVQPQGE) form a disordered region. A PRC barrel domain is found at 145–222 (EDEFYWVDLI…RIVVDWGLDY (78 aa)).

It belongs to the RimM family. In terms of assembly, binds ribosomal protein uS19.

Its subcellular location is the cytoplasm. Its function is as follows. An accessory protein needed during the final step in the assembly of 30S ribosomal subunit, possibly for assembly of the head region. Essential for efficient processing of 16S rRNA. May be needed both before and after RbfA during the maturation of 16S rRNA. It has affinity for free ribosomal 30S subunits but not for 70S ribosomes. This chain is Ribosome maturation factor RimM, found in Cupriavidus necator (strain ATCC 17699 / DSM 428 / KCTC 22496 / NCIMB 10442 / H16 / Stanier 337) (Ralstonia eutropha).